The sequence spans 558 residues: Thermosome subunit alpha (558 aa).

Residues 536-558 (TEKGKKEGGEGAGAETPGAPSLE) are disordered. Residues 548 to 558 (GAETPGAPSLE) show a composition bias toward low complexity.

Belongs to the TCP-1 chaperonin family. Forms a Heterooligomeric complex of two stacked eight-membered rings.

Molecular chaperone; binds unfolded polypeptides in vitro, and has a weak ATPase activity. This Sulfolobus acidocaldarius (strain ATCC 33909 / DSM 639 / JCM 8929 / NBRC 15157 / NCIMB 11770) protein is Thermosome subunit alpha (thsA).